Here is a 436-residue protein sequence, read N- to C-terminus: Prenyltransferase nscD (436 aa).

This sequence belongs to the tryptophan dimethylallyltransferase family.

It functions in the pathway secondary metabolite biosynthesis. Its function is as follows. Prenyltransferase; part of the gene cluster that mediates the biosynthesis of neosartoricin B, a prenylated anthracenone that probably exhibits T-cell antiproliferative activity, suggestive of a physiological role as an immunosuppressive agent. The non-reducing polyketide synthase nscA probably synthesizes and cyclizes the decaketide backbone. The hydrolase nscB then mediates the product release through hydrolysis followed by spontaneous decarboxylation. The prenyltransferase nscD catalyzes the addition of the dimethylallyl group to the aromatic C5. The FAD-dependent monooxygenase nscC is then responsible for the stereospecific hydroxylation at C2. Neosartoricin B can be converted into two additional compounds neosartoricins C and D. Neosartoricin C is a spirocyclic compound that is cyclized through the attack of C3 hydroxyl on C14, followed by dehydration. On the other hand, neosartoricin D is a further cyclized compound in which attack of C2 on C14 in neosartoricin C results in the formation of the acetal-containing dioxabicyclo-octanone ring. Both of these compounds are novel and possibly represent related metabolites of the gene cluster. The chain is Prenyltransferase nscD from Trichophyton tonsurans (strain CBS 112818) (Scalp ringworm fungus).